We begin with the raw amino-acid sequence, 394 residues long: MRMEGGGGGGHGHHGGGGGGHGHHGGIGGGEAQIKGTLTHGGRYVQYNVYGNLFEVSSKYVPPIRPVGRGACGIICAVVNAQTRQEVAIKKIGNAFDNQIDAKRTLREIKLLRHMDHDNVISIKDIIRPPRRENFNDVYIVYELMDTDLHHLLRSNQPLTDDHCQYFLYQVLRGLKYVHSANVLHRDLRPSNLLLNAKCDLKIGDFGLARTTNETDFMMEYVVTRWYRAPELLLNCSEYTAAIDIWSVGCILGEIVTREPLFPGKDYVHQLRLITELIGSPDDSSLGFLRSDNARRYVRSLPQYPKQQFRARFPTMSSGAMDLLERMLVFDPSKRITVDEALCHPYLASLHEIYDEPVCPAPFSFDFEQPSLTEEDIKEIIWREALKFNPEPIH.

Over residues 1–31 (MRMEGGGGGGHGHHGGGGGGHGHHGGIGGGE) the composition is skewed to gly residues. The tract at residues 1-33 (MRMEGGGGGGHGHHGGGGGGHGHHGGIGGGEAQ) is disordered. A Protein kinase domain is found at 61–347 (VPPIRPVGRG…VDEALCHPYL (287 aa)). Residues 67-75 (VGRGACGII) and Lys90 contribute to the ATP site. Asp187 acts as the Proton acceptor in catalysis. Position 221 is a phosphotyrosine (Tyr221).

This sequence belongs to the protein kinase superfamily. CMGC Ser/Thr protein kinase family. MAP kinase subfamily. Post-translationally, the phosphorylation on Tyr-221 activates the enzyme. A conserved Thr, which must also be phosphorylated to activate the enzyme in closely related sequences, is replaced by Met-219 in this sequence.

The enzyme catalyses L-seryl-[protein] + ATP = O-phospho-L-seryl-[protein] + ADP + H(+). It catalyses the reaction L-threonyl-[protein] + ATP = O-phospho-L-threonyl-[protein] + ADP + H(+). The protein is Mitogen-activated protein kinase 2 (MPK2) of Oryza sativa subsp. japonica (Rice).